Here is a 270-residue protein sequence, read N- to C-terminus: MELGIVAKRETPRAVELADRIRRHVDVPVTLDNLTADELDANGTDVTSLSACDLVVSIGGDGTFLFAAREVSPTPVLGVNLGEVGFLNAVSPEECVETVAGVVERMQAGDAELQELPQLQATGPGLSLPAAVNEVAVLGPQRGRDNGLDIDVRVNGEGYSSGRADGVLVSTPTGSTAYNLSEGGPIVHPDVSAFVVTEMCAESSMPSLAVPTDRTITVHVDGADHAVVAADGRTRSQVAPPAEITLAVAADPVRIAGPKLEFFTALDKLD.

D61 serves as the catalytic Proton acceptor. Residues 61 to 62 (DG), 133 to 134 (NE), R144, R163, D165, and 176 to 181 (TAYNLS) each bind NAD(+).

It belongs to the NAD kinase family. The cofactor is a divalent metal cation.

Its subcellular location is the cytoplasm. It carries out the reaction NAD(+) + ATP = ADP + NADP(+) + H(+). In terms of biological role, involved in the regulation of the intracellular balance of NAD and NADP, and is a key enzyme in the biosynthesis of NADP. Catalyzes specifically the phosphorylation on 2'-hydroxyl of the adenosine moiety of NAD to yield NADP. The sequence is that of NAD kinase from Natronomonas pharaonis (strain ATCC 35678 / DSM 2160 / CIP 103997 / JCM 8858 / NBRC 14720 / NCIMB 2260 / Gabara) (Halobacterium pharaonis).